A 659-amino-acid chain; its full sequence is MSETLADSELIKLTLPNGDVRAYPKGVTGSEVAASIGKRLAEDALAIKFGGKLKDLAFPIQQDGAIEIVTFDSDEGKALYWHSSSHLMAQAIEELFPGTKFGAGPSIETGFYYDVASEHRFSEADLREIEARMLEISNRDLQIQREELSREAAIEYFKTRREDPFKVEILEDTLKDTPVVSIYHQGEFSDLCSGPHFSSTSKLKAVRLTSISGSFWRGDASRQQMQRIYGVSFPSEKLLKKHFSQIEEAKKRDHRKLGSELELFMISPEVGSGLPMWLPKGAILRNELESFLKDEQRRRGYLPVVTPHIGNIELYKTSGHYPYYSDSQFPPLTFTDELGKEEQYLLKPMNCPHHHQIYSSKPRSYRDLPIRLTEFGTVYRYEQSGELNGLIRVRGFTQDDSHIYCRQDQLVDEICKAIDLTQFVFKTLGFAEVQTRLSLRDPENTSKYSGNNEVWVQAEQDLKDAADKMQLNYFIGLGEASFYGPKIDFIVRDAIGRKWQLGTVQVDYVMPERFDLTYVGSDGQKHRPVVIHRAPFGSLERFIGILIENFAGNFPVWLSPVQVMVLPITDDFRDYAHSVLQKLLDAGIRAEIDERGEKVGKKIRDAEIKKIPYMFVVGEKEMAAASVAVRRHKEGDKGTMPLQEAIRLLQTDISTKKIS.

The TGS domain occupies 7–70; that stretch reads DSELIKLTLP…QQDGAIEIVT (64 aa). A catalytic region spans residues 253–555; it reads DHRKLGSELE…LIENFAGNFP (303 aa). Zn(2+) contacts are provided by Cys351, His402, and His532.

It belongs to the class-II aminoacyl-tRNA synthetase family. In terms of assembly, homodimer. Zn(2+) serves as cofactor.

It is found in the cytoplasm. The enzyme catalyses tRNA(Thr) + L-threonine + ATP = L-threonyl-tRNA(Thr) + AMP + diphosphate + H(+). Catalyzes the attachment of threonine to tRNA(Thr) in a two-step reaction: L-threonine is first activated by ATP to form Thr-AMP and then transferred to the acceptor end of tRNA(Thr). Also edits incorrectly charged L-seryl-tRNA(Thr). The chain is Threonine--tRNA ligase from Chloroherpeton thalassium (strain ATCC 35110 / GB-78).